The sequence spans 82 residues: Small ribosomal subunit protein bS16 (82 aa).

This sequence belongs to the bacterial ribosomal protein bS16 family.

The protein is Small ribosomal subunit protein bS16 of Enterobacter sp. (strain 638).